A 407-amino-acid chain; its full sequence is Substance-P receptor (407 aa).

Topologically, residues 1 to 31 (MDNVLPVDSDLFPNISTNTSEPNQFVQPAWQ) are extracellular. Residues asparagine 14 and asparagine 18 are each glycosylated (N-linked (GlcNAc...) asparagine). Residues 32–54 (IVLWAAAYTVIVVTSVVGNVVVM) form a helical membrane-spanning segment. Topologically, residues 55–64 (WIILAHKRMR) are cytoplasmic. The chain crosses the membrane as a helical span at residues 65 to 86 (TVTNYFLVNLAFAEASMAAFNT). The Extracellular portion of the chain corresponds to 87 to 106 (VVNFTYAVHNEWYYGLFYCK). Cysteine 105 and cysteine 180 are oxidised to a cystine. The chain crosses the membrane as a helical span at residues 107–128 (FHNFFPIAAVFASIYSMTAVAF). Over 129–148 (DRYMAIIHPLQPRLSATATK) the chain is Cytoplasmic. Residues 149–169 (VVICVIWVLALLLAFPQGYYS) traverse the membrane as a helical segment. The Extracellular portion of the chain corresponds to 170-194 (TTETMPGRVVCMIEWPSHPDKIYEK). The helical transmembrane segment at 195-219 (VYHICVTVLIYFLPLLVIGYAYTVV) threads the bilayer. At 220-248 (GITLWASEIPGDSSDRYHEQVSAKRKVVK) the chain is on the cytoplasmic side. Residues 249–270 (MMIVVVCTFAICWLPFHIFFLL) form a helical membrane-spanning segment. At 271-283 (PYINPDLYLKKFI) the chain is on the extracellular side. A helical membrane pass occupies residues 284-308 (QQVYLAIMWLAMSSTMYNPIIYCCL). Residues 309–407 (NDRFRLGFKH…SSSFYSNMLS (99 aa)) are Cytoplasmic-facing. Cysteine 322 is lipidated: S-palmitoyl cysteine. A disordered region spans residues 363-407 (GAHEEDPEEGPKATPSSLDLTSNGSSRSNSKTVTESSSFYSNMLS). Residues 376–407 (TPSSLDLTSNGSSRSNSKTVTESSSFYSNMLS) show a composition bias toward polar residues.

The protein belongs to the G-protein coupled receptor 1 family. As to quaternary structure, interacts with ARRB1.

It localises to the cell membrane. In terms of biological role, this is a receptor for the tachykinin neuropeptide substance P. It is probably associated with G proteins that activate a phosphatidylinositol-calcium second messenger system. The rank order of affinity of this receptor to tachykinins is: substance P &gt; substance K &gt; neuromedin-K. This Cavia porcellus (Guinea pig) protein is Substance-P receptor (TACR1).